Reading from the N-terminus, the 267-residue chain is Hydroxyethylthiazole kinase 2 (267 aa).

Met41 lines the substrate pocket. Residues Lys116 and Thr166 each contribute to the ATP site. Gly193 contributes to the substrate binding site.

This sequence belongs to the Thz kinase family. Requires Mg(2+) as cofactor.

It carries out the reaction 5-(2-hydroxyethyl)-4-methylthiazole + ATP = 4-methyl-5-(2-phosphooxyethyl)-thiazole + ADP + H(+). It functions in the pathway cofactor biosynthesis; thiamine diphosphate biosynthesis; 4-methyl-5-(2-phosphoethyl)-thiazole from 5-(2-hydroxyethyl)-4-methylthiazole: step 1/1. Functionally, catalyzes the phosphorylation of the hydroxyl group of 4-methyl-5-beta-hydroxyethylthiazole (THZ). The sequence is that of Hydroxyethylthiazole kinase 2 from Streptococcus pneumoniae (strain P1031).